A 2254-amino-acid chain; its full sequence is Acetyl-CoA carboxylase 1 (2254 aa).

Residues 36 to 543 (PIHSILIANN…HTGWLDSRIA (508 aa)) form the Biotin carboxylation domain. Residues 189–381 (NSNLVTIPEE…LPAAQVAVGM (193 aa)) enclose the ATP-grasp domain. 215–272 (CQVVGYPAMIKASWGGGGKGIRKVHNDDEVRALFKQVQGEVPGSPIFIMKVASQSRHL) contributes to the ATP binding site. Mg(2+)-binding residues include Glu338, Glu352, and Asn354. The Mn(2+) site is built by Glu338, Glu352, and Asn354. The active site involves Arg356. One can recognise a Biotinyl-binding domain in the interval 670–744 (LQNDHDPSKL…QAGELIANLD (75 aa)). Residue Lys711 is modified to N6-biotinyllysine. Thr1031 is modified (phosphothreonine). Phosphoserine is present on Ser1192. In terms of domain architecture, CoA carboxyltransferase N-terminal spans 1492 to 1831 (QYKPLGYLDR…YVGGPLPVLA (340 aa)). The interval 1492–2150 (QYKPLGYLDR…ESSLVKNVRE (659 aa)) is carboxyltransferase. CoA is bound by residues Arg1740, Lys2041, and Arg2043. The region spanning 1835–2150 (PPERIVEYVP…ESSLVKNVRE (316 aa)) is the CoA carboxyltransferase C-terminal domain.

As to quaternary structure, homodimer. It depends on biotin as a cofactor. The cofactor is Mg(2+). Mn(2+) serves as cofactor. As to expression, expressed in roots, trichomes, epidermal leaf cells, siliques, petals, anthers, and seeds.

The protein localises to the cytoplasm. It is found in the cytosol. The enzyme catalyses hydrogencarbonate + acetyl-CoA + ATP = malonyl-CoA + ADP + phosphate + H(+). It catalyses the reaction N(6)-biotinyl-L-lysyl-[protein] + hydrogencarbonate + ATP = N(6)-carboxybiotinyl-L-lysyl-[protein] + ADP + phosphate + H(+). It participates in lipid metabolism; malonyl-CoA biosynthesis; malonyl-CoA from acetyl-CoA: step 1/1. In terms of biological role, multifunctional enzyme that catalyzes the carboxylation of acetyl-CoA, forming malonyl-CoA, which is used in the plastid for fatty acid synthesis and in the cytosol in various biosynthetic pathways including fatty acid elongation. Required for very long chain fatty acids elongation. Necessary for embryo and plant development. Plays a central function in embryo morphogenesis, especially in apical meristem development. Involved in cell proliferation and tissue patterning. May act as a repressor of cytokinin response. This Arabidopsis thaliana (Mouse-ear cress) protein is Acetyl-CoA carboxylase 1 (ACC1).